Here is a 609-residue protein sequence, read N- to C-terminus: Interleukin-1 receptor-associated kinase 3 (609 aa).

Positions 41 to 106 constitute a Death domain; sequence WRGLAERLSN…RAIHLIINYG (66 aa). At T110 the chain carries Phosphothreonine. Residues 178 to 463 form the Protein kinase domain; sequence FHKDFLIGEG…SSLESTQPSL (286 aa). Residues 184–192, K205, 308–311, and D324 contribute to the ATP site; these read IGEGEIFEV and SSAN. S480 carries the phosphoserine modification.

It belongs to the protein kinase superfamily. TKL Ser/Thr protein kinase family. Pelle subfamily. Monomer. Homodimer. May interact with IRAK4 (when phosphorylated). Interacts (when phosphorylated at Thr-110) with PIN1 (via WW domain) in response to IL33-mediated (but not TLR4 ligand LPS) dendritic cell stimulation. Expressed in inflamed lung macrophages (at protein level). Expressed in dendritic cells (at protein level). Highly expressed in liver and thymus and at lower levels in heart, brain, spleen and kidney.

It localises to the cytoplasm. The protein localises to the nucleus. Its function is as follows. Putative inactive protein kinase which regulates signaling downstream of immune receptors including IL1R and Toll-like receptors. Inhibits dissociation of IRAK1 and IRAK4 from the Toll-like receptor signaling complex by either inhibiting the phosphorylation of IRAK1 and IRAK4 or stabilizing the receptor complex. Upon IL33-induced lung inflammation, positively regulates expression of IL6, CSF3, CXCL2 and CCL5 mRNAs in dendritic cells. This Mus musculus (Mouse) protein is Interleukin-1 receptor-associated kinase 3.